The sequence spans 419 residues: Tryptophan synthase beta chain (419 aa).

Position 86 is an N6-(pyridoxal phosphate)lysine (Lys86). The span at 394 to 403 (VEQQKVEQQK) shows a compositional bias: basic and acidic residues. Positions 394–419 (VEQQKVEQQKADNQNTEKNNQESGNE) are disordered. Positions 404–419 (ADNQNTEKNNQESGNE) are enriched in polar residues.

Belongs to the TrpB family. Tetramer of two alpha and two beta chains. It depends on pyridoxal 5'-phosphate as a cofactor.

It carries out the reaction (1S,2R)-1-C-(indol-3-yl)glycerol 3-phosphate + L-serine = D-glyceraldehyde 3-phosphate + L-tryptophan + H2O. Its pathway is amino-acid biosynthesis; L-tryptophan biosynthesis; L-tryptophan from chorismate: step 5/5. The beta subunit is responsible for the synthesis of L-tryptophan from indole and L-serine. This chain is Tryptophan synthase beta chain, found in Shewanella halifaxensis (strain HAW-EB4).